The sequence spans 510 residues: Protein disulfide-isomerase (510 aa).

The first 20 residues, 1–20, serve as a signal peptide directing secretion; that stretch reads MLRRALLCLALTALFRAGAG. The 110-residue stretch at 27–136 folds into the Thioredoxin 1 domain; that stretch reads HVLVLHKGNF…IVNWLKKRTG (110 aa). Catalysis depends on nucleophile residues Cys-55 and Cys-58. A disulfide bridge connects residues Cys-55 and Cys-58. Lys-202 is modified (N6-acetyllysine). An N6-succinyllysine mark is found at Lys-224 and Lys-273. Phosphoserine is present on residues Ser-333 and Ser-359. The 127-residue stretch at 351-477 folds into the Thioredoxin 2 domain; it reads GKIKPHLMSQ…FKKFLESGGQ (127 aa). Residues Cys-399 and Cys-402 each act as nucleophile in the active site. An intrachain disulfide couples Cys-399 to Cys-402. Ser-429 is modified (phosphoserine). The tract at residues 473 to 510 is disordered; that stretch reads ESGGQDGAGDDDDLEDLEEAEEPDLEEDDDQKAVKDEL. The segment covering 480 to 502 has biased composition (acidic residues); sequence AGDDDDLEDLEEAEEPDLEEDDD. The short motif at 507 to 510 is the Prevents secretion from ER element; sequence KDEL.

It belongs to the protein disulfide isomerase family. Heterodimer; heterodimerizes with the protein microsomal triglyceride transfer MTTP. Homodimer. Monomers and homotetramers may also occur. Interacts with P4HA2, forming a heterotetramer consisting of 2 alpha subunits (P4HA2) and 2 beta (P4HB), where P4HB plays the role of a structural subunit; this tetramer catalyzes the formation of 4-hydroxyproline in collagen. Also constitutes the structural subunit of the microsomal triacylglycerol transfer protein MTTP in mammalian cells. Stabilizes both enzymes and retain them in the ER without contributing to the catalytic activity. Binds UBQLN1. Interacts with ERO1B. Interacts with ILDR2. Interacts with ERN1/IRE1A (via N-terminus); the interaction is enhanced by phosphorylation of P4HB by FAM20C in response to endoplasmic reticulum stress and results in attenuation of ERN1 activity. Phosphorylation of Ser-359 by FAM20C is induced by endoplasmic reticulum stress and results in a functional switch from oxidoreductase to molecular chaperone. It also promotes interaction with ERN1.

Its subcellular location is the endoplasmic reticulum. It is found in the endoplasmic reticulum lumen. The protein localises to the melanosome. The protein resides in the cell membrane. The catalysed reaction is Catalyzes the rearrangement of -S-S- bonds in proteins.. Functionally, this multifunctional protein catalyzes the formation, breakage and rearrangement of disulfide bonds. At the cell surface, seems to act as a reductase that cleaves disulfide bonds of proteins attached to the cell. May therefore cause structural modifications of exofacial proteins. Inside the cell, seems to form/rearrange disulfide bonds of nascent proteins. At high concentrations and following phosphorylation by FAM20C, functions as a chaperone that inhibits aggregation of misfolded proteins. At low concentrations, facilitates aggregation (anti-chaperone activity). May be involved with other chaperones in the structural modification of the TG precursor in hormone biogenesis. Also acts as a structural subunit of various enzymes such as prolyl 4-hydroxylase and microsomal triacylglycerol transfer protein MTTP. Receptor for LGALS9; the interaction retains P4HB at the cell surface of Th2 T helper cells, increasing disulfide reductase activity at the plasma membrane, altering the plasma membrane redox state and enhancing cell migration. The protein is Protein disulfide-isomerase (P4HB) of Bos taurus (Bovine).